The chain runs to 23 residues: Cysteine proteinase (23 aa).

Positions 1–10 (ADSLDWREKG) are enriched in basic and acidic residues. The disordered stretch occupies residues 1–23 (ADSLDWREKGVVNSIKDQAQXGS).

Belongs to the peptidase C1 family.

This chain is Cysteine proteinase, found in Tritrichomonas foetus (Trichomonas foetus).